The following is a 420-amino-acid chain: Odorant receptor 63a (420 aa).

The Cytoplasmic segment spans residues 1–43 (MYSPEEAAELKRRNYRSIREMIRLSYTVGFNLLDPSRCGQVLR). A helical membrane pass occupies residues 44 to 64 (IWTIVLSVSSLASLYGHWQML). Residues 65–76 (ARYIHDIPRIGE) are Extracellular-facing. Residues 77-97 (TAGTALQFLTSIAKMWYFLFA) traverse the membrane as a helical segment. The Cytoplasmic segment spans residues 98–150 (HRQIYELLRKARCHELLQKCELFERMSDLPVIKEIRQQVESTMNRYWASTRRQ). A helical transmembrane segment spans residues 151-171 (ILIYLYSCICITTNYFINSFV). Residues 172 to 217 (INLYRYFTKPKGSYDIMLPLPSLYPAWEHKGLEFPYYHIQMYLETC) are Extracellular-facing. The helical transmembrane segment at 218–238 (SLYICGMCAVSFDGVFIVLCL) threads the bilayer. The Cytoplasmic segment spans residues 239 to 296 (HSVGLMRSLNQMVEQATSELVPPDRRVEYLRCCIYQYQRVANFATEVNNCFRHITFTQ). The chain crosses the membrane as a helical span at residues 297 to 317 (FLLSLFNWGLALFQMSVGLGN). N-linked (GlcNAc...) asparagine glycosylation occurs at N318. Over 318–320 (NSS) the chain is Extracellular. The helical transmembrane segment at 321–341 (ITMIRMTMYLVAAGYQIVVYC) threads the bilayer. Topologically, residues 342–387 (YNGQRFATASEEIANAFYQVRWYGESREFRHLIRMMLMRTNRGFRL) are cytoplasmic. The helical transmembrane segment at 388–408 (DVSWFMQMSLPTLMAMVRTSG) threads the bilayer. Over 409 to 420 (QYFLLLQNVNQK) the chain is Extracellular.

This sequence belongs to the insect chemoreceptor superfamily. Heteromeric odorant receptor channel (TC 1.A.69) family. Or63a subfamily. In terms of assembly, interacts with Orco. Complexes exist early in the endomembrane system in olfactory sensory neurons (OSNs), coupling these complexes to the conserved ciliary trafficking pathway.

Its subcellular location is the cell membrane. Odorant receptor which mediates acceptance or avoidance behavior, depending on its substrates. The odorant receptor repertoire encodes a large collection of odor stimuli that vary widely in identity, intensity, and duration. May form a complex with Orco to form odorant-sensing units, providing sensitive and prolonged odorant signaling and calcium permeability. Involved in the behavioral responses to butyl acetate, isoamyl acetate, and hexanoic acid. The chain is Odorant receptor 63a (Or63a) from Drosophila melanogaster (Fruit fly).